The sequence spans 92 residues: Small ribosomal subunit protein uS19 (92 aa).

The protein belongs to the universal ribosomal protein uS19 family.

Its function is as follows. Protein S19 forms a complex with S13 that binds strongly to the 16S ribosomal RNA. The chain is Small ribosomal subunit protein uS19 from Streptococcus pyogenes serotype M49 (strain NZ131).